A 61-amino-acid chain; its full sequence is Large ribosomal subunit protein eL24 (61 aa).

Zn(2+) is bound by residues cysteine 7, cysteine 10, cysteine 33, and cysteine 37. The segment at 7 to 37 (CTYCGRSIEPGTGLMYVKNDGSVLWFCSSKC) adopts a C4-type zinc-finger fold.

This sequence belongs to the eukaryotic ribosomal protein eL24 family. As to quaternary structure, part of the 50S ribosomal subunit. Forms a cluster with proteins L3 and L14. It depends on Zn(2+) as a cofactor.

Functionally, binds to the 23S rRNA. The polypeptide is Large ribosomal subunit protein eL24 (Hyperthermus butylicus (strain DSM 5456 / JCM 9403 / PLM1-5)).